The chain runs to 292 residues: Homoserine kinase (292 aa).

84 to 94 (PFSRGLGSSSA) lines the ATP pocket.

It belongs to the GHMP kinase family. Homoserine kinase subfamily.

The protein resides in the cytoplasm. It catalyses the reaction L-homoserine + ATP = O-phospho-L-homoserine + ADP + H(+). Its pathway is amino-acid biosynthesis; L-threonine biosynthesis; L-threonine from L-aspartate: step 4/5. Catalyzes the ATP-dependent phosphorylation of L-homoserine to L-homoserine phosphate. The polypeptide is Homoserine kinase (Campylobacter hominis (strain ATCC BAA-381 / DSM 21671 / CCUG 45161 / LMG 19568 / NCTC 13146 / CH001A)).